Here is a 505-residue protein sequence, read N- to C-terminus: Chemotaxis regulatory protein ChePep (505 aa).

Disordered stretches follow at residues 154–403 (EPNN…EDIP) and 420–465 (EAVA…SSPL). Basic and acidic residues-rich tracts occupy residues 172 to 263 (EEVK…EKTQ), 289 to 311 (ENKE…EVVT), 337 to 346 (QAHELEKQEI), 359 to 373 (QDKE…KEET), and 386 to 398 (PQEK…HYES). Low complexity predominate over residues 440–451 (TETSKNENNTET).

As to quaternary structure, interacts with CheZ; the interaction is essential for each other polar localization.

It localises to the cytoplasm. Its function is as follows. Plays an essential role in chemotaxis. Regulates flagellar rotation through the formation of a complex with chemotaxis protein CheZ. Plays a major role in colonization of the stomach. The polypeptide is Chemotaxis regulatory protein ChePep (Helicobacter pylori (strain ATCC 700392 / 26695) (Campylobacter pylori)).